Reading from the N-terminus, the 485-residue chain is Aldehyde dehydrogenase family 3 member A2 (485 aa).

Over 1-463 the chain is Cytoplasmic; that stretch reads MEREVQRVRQ…FLLRRFNKEK (463 aa). 185–190 serves as a coordination point for NAD(+); it reads GNTAVG. Active-site residues include E207 and C241. Residue S293 is modified to Phosphoserine. Residues 464–484 traverse the membrane as a helical segment; it reads LGLLVLTFLGIVAAVLVNAGY. A Prevents secretion from ER motif is present at residues 481–484; that stretch reads NAGY.

This sequence belongs to the aldehyde dehydrogenase family. As to quaternary structure, homodimer.

It localises to the microsome membrane. The protein resides in the endoplasmic reticulum membrane. It carries out the reaction an aldehyde + NAD(+) + H2O = a carboxylate + NADH + 2 H(+). It catalyses the reaction a fatty aldehyde + NAD(+) + H2O = a fatty acid + NADH + 2 H(+). The catalysed reaction is (2E)-hexadecenal + NAD(+) + H2O = (E)-hexadec-2-enoate + NADH + 2 H(+). The enzyme catalyses hexadecanoate + NADH + 2 H(+) = hexadecanal + NAD(+) + H2O. It carries out the reaction 22-oxodocosanoate + NAD(+) + H2O = docosanedioate + NADH + 2 H(+). It catalyses the reaction 2,6,10,14-tetramethylpentadecanal + NAD(+) + H2O = 2,6,10,14-tetramethylpentadecanoate + NADH + 2 H(+). The catalysed reaction is octadecanal + NAD(+) + H2O = octadecanoate + NADH + 2 H(+). The enzyme catalyses dodecanoate + NADH + 2 H(+) = dodecanal + NAD(+) + H2O. It carries out the reaction decanal + NAD(+) + H2O = decanoate + NADH + 2 H(+). It catalyses the reaction tetradecanal + NAD(+) + H2O = tetradecanoate + NADH + 2 H(+). The catalysed reaction is octanal + NAD(+) + H2O = octanoate + NADH + 2 H(+). The enzyme catalyses heptanal + NAD(+) + H2O = heptanoate + NADH + 2 H(+). It carries out the reaction (2E,6E)-farnesal + NAD(+) + H2O = (2E,6E)-farnesoate + NADH + 2 H(+). Its function is as follows. Catalyzes the oxidation of medium and long-chain aliphatic aldehydes to fatty acids. Active on a variety of saturated and unsaturated aliphatic aldehydes between 6 and 24 carbons in length. Responsible for conversion of the sphingosine 1-phosphate (S1P) degradation product hexadecenal to hexadecenoic acid. The sequence is that of Aldehyde dehydrogenase family 3 member A2 (ALDH3A2) from Macaca fascicularis (Crab-eating macaque).